The sequence spans 123 residues: Large ribosomal subunit protein uL29y (123 aa).

It belongs to the universal ribosomal protein uL29 family.

The sequence is that of Large ribosomal subunit protein uL29y (RPL35B) from Arabidopsis thaliana (Mouse-ear cress).